The primary structure comprises 350 residues: Histidinol-phosphate aminotransferase (350 aa).

Residue K220 is modified to N6-(pyridoxal phosphate)lysine.

Belongs to the class-II pyridoxal-phosphate-dependent aminotransferase family. Histidinol-phosphate aminotransferase subfamily. In terms of assembly, homodimer. Pyridoxal 5'-phosphate serves as cofactor.

It carries out the reaction L-histidinol phosphate + 2-oxoglutarate = 3-(imidazol-4-yl)-2-oxopropyl phosphate + L-glutamate. Its pathway is amino-acid biosynthesis; L-histidine biosynthesis; L-histidine from 5-phospho-alpha-D-ribose 1-diphosphate: step 7/9. The chain is Histidinol-phosphate aminotransferase from Macrococcus caseolyticus (strain JCSC5402) (Macrococcoides caseolyticum).